A 311-amino-acid polypeptide reads, in one-letter code: Methionyl-tRNA formyltransferase (311 aa).

110–113 (SLLP) lines the (6S)-5,6,7,8-tetrahydrofolate pocket.

This sequence belongs to the Fmt family.

The enzyme catalyses L-methionyl-tRNA(fMet) + (6R)-10-formyltetrahydrofolate = N-formyl-L-methionyl-tRNA(fMet) + (6S)-5,6,7,8-tetrahydrofolate + H(+). Its function is as follows. Attaches a formyl group to the free amino group of methionyl-tRNA(fMet). The formyl group appears to play a dual role in the initiator identity of N-formylmethionyl-tRNA by promoting its recognition by IF2 and preventing the misappropriation of this tRNA by the elongation apparatus. This chain is Methionyl-tRNA formyltransferase, found in Streptococcus sanguinis (strain SK36).